Reading from the N-terminus, the 331-residue chain is uncharacterized protein (331 aa).

Disordered stretches follow at residues 131-163 (ISHA…KKRS) and 190-209 (DEQK…VQSS). The segment covering 140-162 (RPKPTKPRASRKRAAIAQSKKKR) has biased composition (basic residues). Positions 195 to 209 (RQSTSQPDKEIVQSS) are enriched in polar residues.

This is an uncharacterized protein from Caenorhabditis elegans.